The following is a 169-amino-acid chain: MKPSSSNSRSKGHAKARRKTREELDQEARDRKRQKKRRGHAPGSRAAGGNTTSGSKGQNAPKDPRIGSKTPIPLGVTEKVTKQHKPKSEKPMLSPQAELELLETDERLDALLERLEAGETLSAEEQSWVDAKLDRIDELMQKLGLSYDDDEEEEEDEKQEDMMRLLRGN.

Disordered stretches follow at residues 1–98 (MKPS…PQAE) and 144–169 (GLSY…LRGN). The segment covering 10–19 (SKGHAKARRK) has biased composition (basic residues). The span at 20-30 (TREELDQEARD) shows a compositional bias: basic and acidic residues. Positions 31-40 (RKRQKKRRGH) are enriched in basic residues. Residues 49-58 (GNTTSGSKGQ) show a composition bias toward polar residues. Positions 147-159 (YDDDEEEEEDEKQ) are enriched in acidic residues. A compositionally biased stretch (basic and acidic residues) spans 160–169 (EDMMRLLRGN).

The protein belongs to the YihI family. As to quaternary structure, interacts with Der.

A GTPase-activating protein (GAP) that modifies Der/EngA GTPase function. May play a role in ribosome biogenesis. The protein is Der GTPase-activating protein YihI of Escherichia coli O139:H28 (strain E24377A / ETEC).